The chain runs to 468 residues: Uronate isomerase (468 aa).

The protein belongs to the metallo-dependent hydrolases superfamily. Uronate isomerase family.

The enzyme catalyses D-glucuronate = D-fructuronate. It carries out the reaction aldehydo-D-galacturonate = keto-D-tagaturonate. Its pathway is carbohydrate metabolism; pentose and glucuronate interconversion. The sequence is that of Uronate isomerase from Bacteroides thetaiotaomicron (strain ATCC 29148 / DSM 2079 / JCM 5827 / CCUG 10774 / NCTC 10582 / VPI-5482 / E50).